A 162-amino-acid chain; its full sequence is Photosystem II extrinsic protein V (162 aa).

A signal peptide spans 1–26 (MFNKNFWTSIIIGCLFCTITYSGVNA). 4 residues coordinate heme c: Cys62, Cys65, His66, and His117.

The protein belongs to the cytochrome c family. PsbV subfamily. As to quaternary structure, PSII is composed of 1 copy each of membrane proteins PsbA, PsbB, PsbC, PsbD, PsbE, PsbF, PsbH, PsbI, PsbJ, PsbK, PsbL, PsbM, PsbT, PsbX, PsbY, PsbZ, Psb30/Ycf12, at least 3 peripheral proteins of the oxygen-evolving complex and a large number of cofactors. It forms dimeric complexes. The cofactor is heme c.

The protein resides in the plastid. It localises to the cyanelle thylakoid membrane. Functionally, one of the extrinsic, lumenal subunits of photosystem II (PSII). PSII is a light-driven water plastoquinone oxidoreductase, using light energy to abstract electrons from H(2)O, generating a proton gradient subsequently used for ATP formation. The extrinsic proteins stabilize the structure of photosystem II oxygen-evolving complex (OEC), the ion environment of oxygen evolution and protect the OEC against heat-induced inactivation. The sequence is that of Photosystem II extrinsic protein V from Cyanophora paradoxa.